Consider the following 327-residue polypeptide: MLPSRRKAAQLPWEDGRARLLPGGLRRKCSIFHLFIAFLLLVFFSLLWLQLSCSGDMAQVTRGQGQETSGPPRACPPEPPPEHWEEDESWGPHRLAVLVPFRERFEELLVFVPHMHRFLSRKRIQHHIYVLNQVDHFRFNRAALINVGFLESSNSTDYIAMHDVDLLPLNEELDYGFPEAGPFHVASPELHPLYHYKTYVGGILLLSKQHYQLCNGMSNRFWGWGREDDEFYRRIKGAGLQLFRPSGITTGYQTFRHLHDPAWRKRDQKRIAAQKQEQFKVDREGGLNTVKYRVDSRTALSIGGAPCTVLNVMLDCDKTATPWCIFG.

Over 1–30 the chain is Cytoplasmic; that stretch reads MLPSRRKAAQLPWEDGRARLLPGGLRRKCS. Residues 31-51 form a helical; Signal-anchor for type II membrane protein membrane-spanning segment; the sequence is IFHLFIAFLLLVFFSLLWLQL. At 52 to 327 the chain is on the lumenal side; that stretch reads SCSGDMAQVT…KTATPWCIFG (276 aa). Residues 61–88 are disordered; that stretch reads TRGQGQETSGPPRACPPEPPPEHWEEDE. UDP-alpha-D-galactose contacts are provided by residues 100-104 and 139-141; these read PFRER and FNR. N-linked (GlcNAc...) asparagine glycosylation is present at Asn-154. UDP-alpha-D-galactose contacts are provided by residues 164–165, Tyr-194, and Trp-224; that span reads VD. Residue Asp-165 coordinates Mn(2+). Residue 226–229 participates in N-acetyl-D-glucosamine binding; that stretch reads REDD. A Mn(2+)-binding site is contributed by His-257. UDP-alpha-D-galactose is bound by residues 257–259 and Arg-266; that span reads HLH.

Belongs to the glycosyltransferase 7 family. Mn(2+) serves as cofactor.

It localises to the golgi apparatus. The protein localises to the golgi stack membrane. The enzyme catalyses 3-O-(beta-D-xylosyl)-L-seryl-[protein] + UDP-alpha-D-galactose = 3-O-(beta-D-galactosyl-(1-&gt;4)-beta-D-xylosyl)-L-seryl-[protein] + UDP + H(+). The protein operates within protein modification; protein glycosylation. Functionally, required for the biosynthesis of the tetrasaccharide linkage region of proteoglycans, especially for small proteoglycans in skin fibroblasts. The protein is Beta-1,4-galactosyltransferase 7 (B4galt7) of Mus musculus (Mouse).